The sequence spans 305 residues: UDP-3-O-acyl-N-acetylglucosamine deacetylase (305 aa).

Zn(2+)-binding residues include His79, His238, and Asp242. Catalysis depends on His265, which acts as the Proton donor.

This sequence belongs to the LpxC family. Zn(2+) is required as a cofactor.

The catalysed reaction is a UDP-3-O-[(3R)-3-hydroxyacyl]-N-acetyl-alpha-D-glucosamine + H2O = a UDP-3-O-[(3R)-3-hydroxyacyl]-alpha-D-glucosamine + acetate. It functions in the pathway glycolipid biosynthesis; lipid IV(A) biosynthesis; lipid IV(A) from (3R)-3-hydroxytetradecanoyl-[acyl-carrier-protein] and UDP-N-acetyl-alpha-D-glucosamine: step 2/6. In terms of biological role, catalyzes the hydrolysis of UDP-3-O-myristoyl-N-acetylglucosamine to form UDP-3-O-myristoylglucosamine and acetate, the committed step in lipid A biosynthesis. In Vibrio cholerae serotype O1 (strain ATCC 39541 / Classical Ogawa 395 / O395), this protein is UDP-3-O-acyl-N-acetylglucosamine deacetylase.